A 123-amino-acid polypeptide reads, in one-letter code: Snaclec GPIB-binding protein subunit beta (123 aa).

3 cysteine pairs are disulfide-bonded: cysteine 2-cysteine 13, cysteine 30-cysteine 119, and cysteine 96-cysteine 111. A C-type lectin domain is found at 9-120 (YGGHCYKLFK…CTRLQYFVCE (112 aa)).

Belongs to the snaclec family. As to quaternary structure, heterodimer of subunits alpha and beta; disulfide-linked. Expressed by the venom gland.

The protein localises to the secreted. Its function is as follows. Binds to platelet GPIb (subunit alpha) (GP1BA) and functions as a receptor blocker for vWF binding to GPIb. The platelet GPIb-binding site resides on the GPIB-BP subunit beta and not on the alpha subunit. At a final concentration of 104 nM totally abolishes vWF-dependent shear-induced platelet aggregation (SIPA) at a high shear stress, but had no effect on SIPA at a low shear stress. The polypeptide is Snaclec GPIB-binding protein subunit beta (Bothrops jararaca (Jararaca)).